The sequence spans 566 residues: Chondroitin sulfate proteoglycan 5 (566 aa).

The signal sequence occupies residues 1 to 30 (MGRAGGGGPDWGPPPVLLLLGVTLVLTAGA). Residues 31-423 (VPARETGSAI…SIITDFQVMC (393 aa)) are Extracellular-facing. O-linked (Xyl...) (chondroitin sulfate) serine glycosylation is present at S38. The interval 56-93 (ANDTREEAGLPAAGEDETSWTERGSEMAAVGPGVGPEE) is disordered. An N-linked (GlcNAc...) asparagine glycan is attached at N57. T76 is a glycosylation site (O-linked (GalNAc...) threonine). S123 carries an O-linked (Xyl...) (chondroitin sulfate) serine glycan. The O-linked (GalNAc...) threonine glycan is linked to T132. Disordered stretches follow at residues 137–173 (DEAL…GPEL), 218–249 (DSEG…TPSW), and 263–327 (ESDF…PPQH). An O-linked (GalNAc...) serine glycan is attached at S143. T144, T153, and T155 each carry an O-linked (GalNAc...) threonine glycan. 2 O-linked (GalNAc...) serine glycosylation sites follow: S156 and S160. A compositionally biased stretch (basic and acidic residues) spans 163–173 (VHDKPSVGPEL). T235 carries O-linked (GalNAc...) threonine glycosylation. Positions 265–301 (DFYPTTSFYDDLEEEEEEEEDKDTVGGGDLEDENDLL) are interaction with TNC and TNR. Residues 274–286 (DDLEEEEEEEEDK) are compositionally biased toward acidic residues. Residues N355 and N367 are each glycosylated (N-linked (GlcNAc...) asparagine). The 43-residue stretch at 371 to 413 (RSVCDLFPSYCHNGGQCYLVENIGAFCRCNTQDYIWHKGMRCE) folds into the EGF-like domain. Cystine bridges form between C374/C387, C381/C397, and C399/C412. Residues G394 and F396 each carry the phosphoserine modification. At C397 the chain carries Phosphothreonine. The chain crosses the membrane as a helical span at residues 424 to 444 (VAVGSAALVLLLLFMMTVFFA). Residues 442–460 (FFAKKLYLLKTENTKLRRT) form an interaction with GOPC region. The Cytoplasmic portion of the chain corresponds to 445–566 (KKLYLLKTEN…GVNCLQNNLT (122 aa)). S467, S475, and S477 each carry phosphoserine. T478 is modified (phosphothreonine). S483 and S543 each carry phosphoserine. A disordered region spans residues 531–566 (KEEESFNIQNSMSPKLEGGKGDQDDLGVNCLQNNLT).

As to quaternary structure, binds TNR and probably TNC. Interacts with ERBB3 and GOPC. Interacts with MDK; this interaction is independent of the presence of chondroitin sulfate chains and promotes elongation of oligodendroglial precursor-like cells. N-glycosylated. In terms of processing, O-glycosylated; contains chondroitin sulfate glycans. Part-time proteoglycan, expressed in part as a proteoglycan exhibiting chondroitin sulfate glycans and in part as a non-proteoglycan form. The relative amount of both forms depends on tissues and tissue maturation. In the cerebellum the 2 forms coexist while in the cerebrum the proteoglycan form is predominant. Post-translationally, phosphorylated; in intracellular and extracellular parts. Expressed in olfactory bulb, hippocampus, brain stem, spinal cord, cerebrum and cerebellum. Expressed by Purkinje cells in the cerebellum (at protein level). Expressed in immature and mature cerebellum (isoform 1, isoform 2 and isoform 3).

The protein localises to the cell membrane. It localises to the synaptic cell membrane. The protein resides in the endoplasmic reticulum membrane. It is found in the golgi apparatus membrane. Its subcellular location is the cell surface. The protein localises to the secreted. Functionally, may function as a growth and differentiation factor involved in neuritogenesis. May induce ERBB3 activation. The protein is Chondroitin sulfate proteoglycan 5 (Cspg5) of Mus musculus (Mouse).